A 1520-amino-acid chain; its full sequence is Accessory colonization factor AcfD (1520 aa).

A signal peptide spans 1–16 (MKIRIVSLIVLGFLIG). A lipid anchor (N-palmitoyl cysteine) is attached at C17. A lipid anchor (S-diacylglycerol cysteine) is attached at C17. The Peptidase M60 domain maps to 1085–1388 (GNRQPTGQWA…MFAQLKEWAE (304 aa)).

Its subcellular location is the cell membrane. The protein is Accessory colonization factor AcfD (acfD) of Vibrio cholerae serotype O1 (strain ATCC 39315 / El Tor Inaba N16961).